The primary structure comprises 325 residues: MSSAALVPADDILEPTLQSILDQKSLRWIFVGGKGGVGKTTTSCSLAIQLAKVRKSVLLISTDPAHNLSDAFGQKFGKEARLVDGFDNLSAMEIDPSASMQDLLAAGGEQGEDMGFGLGGMMQDLAFSIPGVDEAMSFAEVLKQVKSLSYEVIVFDTAPTGHTLRFLQFPTVLEKGLAKLSQLSNQFGPMLNSVLGARGGLPGGQNLDEVLSKMESLRETISEVNAQFKDADLTTFVCVCIAEFLSLYETERMIQELTSYQIDTHAIVVNQLLFPGKDSTCEQCKARRKMQKKYLDEIAELYEDFNVVRMPLLVEEVRGKEKLER.

An ATP-binding site is contributed by 34 to 41 (KGGVGKTT). Residue Asp63 is part of the active site. ATP is bound by residues Glu243 and Asn270. Cys281 and Cys284 together coordinate Zn(2+).

The protein belongs to the arsA ATPase family. Homodimer.

Its subcellular location is the cytoplasm. It localises to the endoplasmic reticulum. Its function is as follows. ATPase required for the post-translational delivery of tail-anchored (TA) proteins to the endoplasmic reticulum. Recognizes and selectively binds the transmembrane domain of TA proteins in the cytosol. This complex then targets to the endoplasmic reticulum by membrane-bound receptors, where the tail-anchored protein is released for insertion. This process is regulated by ATP binding and hydrolysis. ATP binding drives the homodimer towards the closed dimer state, facilitating recognition of newly synthesized TA membrane proteins. ATP hydrolysis is required for insertion. Subsequently, the homodimer reverts towards the open dimer state, lowering its affinity for the membrane-bound receptor, and returning it to the cytosol to initiate a new round of targeting. This chain is ATPase GET3, found in Coccidioides posadasii (strain C735) (Valley fever fungus).